The chain runs to 338 residues: Mitochondrial glutathione transporter SLC25A40 (338 aa).

Solcar repeat units lie at residues 13-131, 139-223, and 233-327; these read VTPL…LSAL, NETC…LKKW, and PTFM…GKAF. Helical transmembrane passes span 19–39, 103–123, 142–162, 199–220, 239–259, and 298–318; these read MLAS…LDVV, LWSG…IYFT, CIPI…ISPL, WAPT…YEIL, FTSG…FDVV, and GLFS…AIMI.

This sequence belongs to the mitochondrial carrier (TC 2.A.29) family.

It is found in the mitochondrion inner membrane. It catalyses the reaction glutathione(in) = glutathione(out). Functionally, probable mitochondrial transporter required for glutathione import into mitochondria. Glutathione, which plays key roles in oxidative metabolism, is produced exclusively in the cytosol and is imported in many organelles. Mitochondrial glutathione is required for the activity and stability of proteins containing iron-sulfur clusters, as well as erythropoiesis. The chain is Mitochondrial glutathione transporter SLC25A40 from Homo sapiens (Human).